The chain runs to 887 residues: UPF0182 protein CTC_00086 (887 aa).

A run of 7 helical transmembrane segments spans residues phenylalanine 9–isoleucine 29, phenylalanine 47–leucine 67, leucine 87–tyrosine 107, valine 146–isoleucine 166, glycine 195–isoleucine 215, isoleucine 242–isoleucine 262, and isoleucine 266–threonine 286.

Belongs to the UPF0182 family.

The protein resides in the cell membrane. The sequence is that of UPF0182 protein CTC_00086 from Clostridium tetani (strain Massachusetts / E88).